Here is a 414-residue protein sequence, read N- to C-terminus: 2,3-diketo-5-methylthiopentyl-1-phosphate enolase (414 aa).

Lysine 99 serves as the catalytic Proton acceptor. Residues lysine 148, 174–177, histidine 265, glycine 338, and 360–361 each bind substrate; these read KDDE and GG. Residues lysine 174, aspartate 176, and glutamate 177 each contribute to the Mg(2+) site. An N6-carboxylysine modification is found at lysine 174.

It belongs to the RuBisCO large chain family. Type IV subfamily. Homodimer. It depends on Mg(2+) as a cofactor.

It carries out the reaction 5-methylsulfanyl-2,3-dioxopentyl phosphate = 2-hydroxy-5-methylsulfanyl-3-oxopent-1-enyl phosphate. The protein operates within amino-acid biosynthesis; L-methionine biosynthesis via salvage pathway; L-methionine from S-methyl-5-thio-alpha-D-ribose 1-phosphate: step 3/6. Catalyzes the enolization of 2,3-diketo-5-methylthiopentyl-1-phosphate (DK-MTP-1-P) into 2-hydroxy-3-keto-5-methylthiopentenyl-1-phosphate (HK-MTPenyl-1-P). The sequence is that of 2,3-diketo-5-methylthiopentyl-1-phosphate enolase from Bacillus cereus (strain AH820).